The sequence spans 468 residues: 3-isopropylmalate dehydratase large subunit (468 aa).

3 residues coordinate [4Fe-4S] cluster: C349, C409, and C412.

Belongs to the aconitase/IPM isomerase family. LeuC type 1 subfamily. As to quaternary structure, heterodimer of LeuC and LeuD. It depends on [4Fe-4S] cluster as a cofactor.

It carries out the reaction (2R,3S)-3-isopropylmalate = (2S)-2-isopropylmalate. It participates in amino-acid biosynthesis; L-leucine biosynthesis; L-leucine from 3-methyl-2-oxobutanoate: step 2/4. Catalyzes the isomerization between 2-isopropylmalate and 3-isopropylmalate, via the formation of 2-isopropylmaleate. The sequence is that of 3-isopropylmalate dehydratase large subunit from Roseobacter denitrificans (strain ATCC 33942 / OCh 114) (Erythrobacter sp. (strain OCh 114)).